The following is a 180-amino-acid chain: Nucleoside triphosphate/diphosphate phosphatase (180 aa).

The active-site Proton donor is Arg26. Residues Asn90, Asp106, Asp108, Asp110, Asp123, and Glu126 each contribute to the Mg(2+) site.

This sequence belongs to the Ntdp family. Requires Mg(2+) as cofactor.

The catalysed reaction is a ribonucleoside 5'-triphosphate + H2O = a ribonucleoside 5'-diphosphate + phosphate + H(+). It catalyses the reaction a ribonucleoside 5'-diphosphate + H2O = a ribonucleoside 5'-phosphate + phosphate + H(+). In terms of biological role, has nucleoside phosphatase activity towards nucleoside triphosphates and nucleoside diphosphates. This Staphylococcus haemolyticus (strain JCSC1435) protein is Nucleoside triphosphate/diphosphate phosphatase.